The chain runs to 579 residues: Glypican-2 (579 aa).

A signal peptide spans 1–23; sequence MSALRPLLLLLLPLCPGPGPGPG. Residues S55, S92, and S155 are each glycosylated (O-linked (Xyl...) (heparan sulfate) serine). 2 disordered regions span residues 444–468 and 485–555; these read GGSP…VPTR and ALGH…RSGG. S500 and S502 each carry an O-linked (Xyl...) (heparan sulfate) serine glycan. The segment covering 520-529 has biased composition (pro residues); the sequence is PARPPRPPYP. G554 carries GPI-anchor amidated glycine lipidation. A propeptide spans 555–579 (removed in mature form); sequence GASIGFHTQTILILSLSALALLGPR.

Belongs to the glypican family. In terms of assembly, interacts (via heparan sulfate) with PTN; this interaction promotes neurite outgrowth through binding of PTN with chondroitin sulfate of proteoglycans, thereby releasing PTPRS of chondroitin sulfate proteoglycans (CSPGs) and leading to binding with heparan sulfate of GPC2. Interacts (heparan sulfate chain) with MDK; this interaction is inhibited by heparin followed by chondroitin sulfate E; this interaction induces GPC2 clustering through heparan sulfate chain; this interaction induces neuronal cell adhesion and neurite outgrowth.

It localises to the cell membrane. The protein resides in the secreted. It is found in the extracellular space. Functionally, cell surface proteoglycan that bears heparan sulfate. May fulfill a function related to the motile behaviors of developing neurons. The sequence is that of Glypican-2 (GPC2) from Homo sapiens (Human).